Reading from the N-terminus, the 111-residue chain is UPF0375 protein ule-4 (111 aa).

Residues M1 to A18 form the signal peptide. Residues N23 and N58 are each glycosylated (N-linked (GlcNAc...) asparagine).

Belongs to the UPF0375 family.

The protein resides in the secreted. The protein is UPF0375 protein ule-4 of Caenorhabditis elegans.